The sequence spans 442 residues: Methionine aminopeptidase 2 (442 aa).

The segment at 1 to 81 (MAAQAPTEAL…APTAQSDPPR (81 aa)) is disordered. A compositionally biased stretch (basic residues) spans 56–72 (PLRRRRRRRRTRKKKKA). His-196 provides a ligand contact to substrate. A divalent metal cation is bound by residues Asp-216, Asp-227, and His-296. Residue His-304 coordinates substrate. A divalent metal cation contacts are provided by Glu-329 and Glu-423.

This sequence belongs to the peptidase M24A family. Methionine aminopeptidase eukaryotic type 2 subfamily. Co(2+) serves as cofactor. The cofactor is Zn(2+). It depends on Mn(2+) as a cofactor. Requires Fe(2+) as cofactor.

It is found in the cytoplasm. It carries out the reaction Release of N-terminal amino acids, preferentially methionine, from peptides and arylamides.. Its function is as follows. Cotranslationally removes the N-terminal methionine from nascent proteins. The N-terminal methionine is often cleaved when the second residue in the primary sequence is small and uncharged (Met-Ala-, Cys, Gly, Pro, Ser, Thr, or Val). The sequence is that of Methionine aminopeptidase 2 from Verticillium alfalfae (strain VaMs.102 / ATCC MYA-4576 / FGSC 10136) (Verticillium wilt of alfalfa).